The sequence spans 430 residues: Serine--tRNA ligase (430 aa).

Residues 45 to 58 (ENLQAERNSRSKSI) are compositionally biased toward polar residues. A disordered region spans residues 45–65 (ENLQAERNSRSKSIGQAKARG). Position 237–239 (237–239 (TSE)) interacts with L-serine. 268–270 (RSE) contacts ATP. Residue E291 coordinates L-serine. 355 to 358 (EISS) provides a ligand contact to ATP. S391 is an L-serine binding site.

This sequence belongs to the class-II aminoacyl-tRNA synthetase family. Type-1 seryl-tRNA synthetase subfamily. As to quaternary structure, homodimer. The tRNA molecule binds across the dimer.

The protein localises to the cytoplasm. It carries out the reaction tRNA(Ser) + L-serine + ATP = L-seryl-tRNA(Ser) + AMP + diphosphate + H(+). The enzyme catalyses tRNA(Sec) + L-serine + ATP = L-seryl-tRNA(Sec) + AMP + diphosphate + H(+). It functions in the pathway aminoacyl-tRNA biosynthesis; selenocysteinyl-tRNA(Sec) biosynthesis; L-seryl-tRNA(Sec) from L-serine and tRNA(Sec): step 1/1. Its function is as follows. Catalyzes the attachment of serine to tRNA(Ser). Is also able to aminoacylate tRNA(Sec) with serine, to form the misacylated tRNA L-seryl-tRNA(Sec), which will be further converted into selenocysteinyl-tRNA(Sec). This Erwinia tasmaniensis (strain DSM 17950 / CFBP 7177 / CIP 109463 / NCPPB 4357 / Et1/99) protein is Serine--tRNA ligase.